A 1648-amino-acid polypeptide reads, in one-letter code: eIF-2-alpha kinase GCN2 (1648 aa).

Residues 1–26 (MAGGRGASGRGRAEPQESYSQRQDHE) are disordered. An RWD domain is found at 25-137 (HELQALEAIY…HHVQSFLSEH (113 aa)). A coiled-coil region spans residues 146-205 (HEEMLERQAQEKQQRLLEARRKEEQEQREILHEIQRRKEEIKEEKKRKEMAKQERLEITS). Phosphoserine is present on serine 230. 2 Protein kinase domains span residues 286–538 (VGSD…HSFI) and 589–1000 (FEEL…SELL). ATP contacts are provided by residues 595–603 (LGKGAFGAV) and lysine 618. The disordered stretch occupies residues 661 to 784 (PAVPGTPPPD…CNQKDGSHEI (124 aa)). Threonine 666 bears the Phosphothreonine mark. Composition is skewed to polar residues over residues 673–686 (PQAQDSPATCGKTS) and 704–722 (LSSSVEWSTSAERSTSTRF). 2 stretches are compositionally biased toward acidic residues: residues 730–739 (SSDEEDEDER) and 753–763 (SDSDIIFDNED). The span at 775 to 784 (CNQKDGSHEI) shows a compositional bias: basic and acidic residues. Aspartate 846 functions as the Proton acceptor in the catalytic mechanism. A Phosphothreonine modification is found at threonine 869. Phosphothreonine; by autocatalysis occurs at positions 898 and 903. A histidyl-tRNA synthetase-like region spans residues 1021–1492 (IDGKAYRTMM…DHVMQKLRTK (472 aa)). An N6-acetyllysine modification is found at lysine 1258.

The protein belongs to the protein kinase superfamily. Ser/Thr protein kinase family. GCN2 subfamily. Homodimer; homodimerization is important for kinase activation by uncharged tRNAs. Interacts with GCN1; this interaction stimulates EIF2AK4/GCN2 kinase activity and is impaired by IMPACT upon a variety of stress conditions, such as amino acid depletion, UV-C irradiation, proteasome inhibitor treatment and glucose deprivation. Interacts with DNAJC3; this interaction inhibits EIF2AK4/GCN2 kinase activity during endoplasmic reticulum (ER), hypothermic and amino acid-starving stress conditions. Interacts with MAP3K20; activates EIF2AK4/GCN2 kinase activity in response to moderate ribotoxic stress. Autophosphorylated; autophosphorylation on Thr-898 is increased upon amino acid starvation and in UV irradiation cells and inhibited in presence of IMPACT. In terms of tissue distribution, expressed in liver. Expressed predominantly in the hippocampal CA1 region and the dentate gyrus, and to a lesser degree in CA3 (at protein level). Expressed in liver, lung, brain, kidney, skeletal muscle and testis. Expressed weakly in heart and spleen. Expressed in the hippocampal CA1 and CA3 regions, the dentate gyrus and cerebellum. Isoform 1 is widely expressed. Isoform 1 is expressed in brain, liver, skeletal muscle and testis. Isoform 3 is expressed in lung, brain, testis, prostate and choroid plexus. Isoform 4 is expressed in muscle, lung, kidney, brain, testis and prostate.

The protein localises to the cytoplasm. It catalyses the reaction L-seryl-[protein] + ATP = O-phospho-L-seryl-[protein] + ADP + H(+). The enzyme catalyses L-threonyl-[protein] + ATP = O-phospho-L-threonyl-[protein] + ADP + H(+). With respect to regulation, (Microbial infection) Kinase activity is enhanced by alphavirus genomic RNA sequences. Kinase activity is stimulated upon binding to uncharged tRNAs. Activated by serum starvation (in vitro). Metabolic-stress sensing protein kinase that phosphorylates the alpha subunit of eukaryotic translation initiation factor 2 (EIF2S1/eIF-2-alpha) in response to low amino acid availability. Plays a role as an activator of the integrated stress response (ISR) required for adaptation to amino acid starvation. EIF2S1/eIF-2-alpha phosphorylation in response to stress converts EIF2S1/eIF-2-alpha into a global protein synthesis inhibitor, leading to a global attenuation of cap-dependent translation, and thus to a reduced overall utilization of amino acids, while concomitantly initiating the preferential translation of ISR-specific mRNAs, such as the transcriptional activator ATF4, and hence allowing ATF4-mediated reprogramming of amino acid biosynthetic gene expression to alleviate nutrient depletion. Required for the translational induction of protein kinase PRKCH following amino acid starvation. Binds uncharged tRNAs. Involved in cell cycle arrest by promoting cyclin D1 mRNA translation repression after the unfolded protein response pathway (UPR) activation or cell cycle inhibitor CDKN1A/p21 mRNA translation activation in response to amino acid deprivation. Plays a role in the consolidation of synaptic plasticity, learning as well as formation of long-term memory. Plays a role in neurite outgrowth inhibition. Plays a role in feeding behavior to maintain amino acid homeostasis; contributes to the innate aversion toward diets of imbalanced amino acid composition. Plays a proapoptotic role in response to glucose deprivation. Promotes global cellular protein synthesis repression in response to UV irradiation independently of the stress-activated protein kinase/c-Jun N-terminal kinase (SAPK/JNK) and p38 MAPK signaling pathways. Functionally, (Microbial infection) Plays a role in the antiviral response against alphavirus infection; impairs early viral mRNA translation of the incoming genomic virus RNA, thus preventing alphavirus replication. Its function is as follows. (Microbial infection) Plays a role in modulating the adaptive immune response to Yellow fever virus infection; promotes dendritic cells to initiate autophagy and antigene presentation to both CD4(+) and CD8(+) T-cells under amino acid starvation. This chain is eIF-2-alpha kinase GCN2, found in Mus musculus (Mouse).